A 104-amino-acid polypeptide reads, in one-letter code: Large ribosomal subunit protein bL21 (104 aa).

Belongs to the bacterial ribosomal protein bL21 family. As to quaternary structure, part of the 50S ribosomal subunit. Contacts protein L20.

Its function is as follows. This protein binds to 23S rRNA in the presence of protein L20. The chain is Large ribosomal subunit protein bL21 from Gluconacetobacter diazotrophicus (strain ATCC 49037 / DSM 5601 / CCUG 37298 / CIP 103539 / LMG 7603 / PAl5).